We begin with the raw amino-acid sequence, 306 residues long: Glutathione transport system permease protein GsiC (306 aa).

Residues 1–8 are Cytoplasmic-facing; the sequence is MLNYFIKR. Residues 9–29 traverse the membrane as a helical segment; sequence LLGLIPTLLIVMVLVFLFVHL. Over 30-98 the chain is Periplasmic; sequence LPGDPARLAA…QEIALRFMPT (69 aa). In terms of domain architecture, ABC transmembrane type-1 spans 95 to 292; sequence FMPTFWLTVC…LEFILINLLV (198 aa). The chain crosses the membrane as a helical span at residues 99-119; sequence FWLTVCSMAWAVIFGMAIGIV. The Cytoplasmic segment spans residues 120 to 130; it reads SAVWRNGWPDR. A helical transmembrane segment spans residues 131–151; it reads IGMTLAVSGLSFPAFALGMLL. Residues 152 to 168 lie on the Periplasmic side of the membrane; the sequence is MQIFSVELGWLPTVGAD. A helical membrane pass occupies residues 169 to 189; that stretch reads TWLHYILPSLTLGAAVAAVMA. The Cytoplasmic portion of the chain corresponds to 190 to 228; that stretch reads RFTRASFVDVLQEDYMRTARAKGVRESLVVLKHGLRNAL. Residues 229 to 249 traverse the membrane as a helical segment; sequence IPVVTMMGLQFGFLLGGSIVV. The Periplasmic portion of the chain corresponds to 250 to 278; sequence EKVFNWPGLGRLLVDSVEMRDYPVIQAEV. A helical transmembrane segment spans residues 279-299; the sequence is LLFSLEFILINLLVDMLYAAI. Residues 300-306 lie on the Cytoplasmic side of the membrane; it reads NPAIRYK.

It belongs to the binding-protein-dependent transport system permease family. As to quaternary structure, the complex is composed of two ATP-binding proteins (GsiA), two transmembrane proteins (GsiC and GsiD) and a solute-binding protein (GsiB).

The protein resides in the cell inner membrane. Part of the ABC transporter complex GsiABCD involved in glutathione import. Probably responsible for the translocation of the substrate across the membrane. The chain is Glutathione transport system permease protein GsiC from Pectobacterium atrosepticum (strain SCRI 1043 / ATCC BAA-672) (Erwinia carotovora subsp. atroseptica).